Here is a 156-residue protein sequence, read N- to C-terminus: Small ribosomal subunit protein uS7 (156 aa).

Belongs to the universal ribosomal protein uS7 family. In terms of assembly, part of the 30S ribosomal subunit. Contacts proteins S9 and S11.

One of the primary rRNA binding proteins, it binds directly to 16S rRNA where it nucleates assembly of the head domain of the 30S subunit. Is located at the subunit interface close to the decoding center, probably blocks exit of the E-site tRNA. The protein is Small ribosomal subunit protein uS7 of Brevibacillus brevis (strain 47 / JCM 6285 / NBRC 100599).